The sequence spans 825 residues: NT-3 growth factor receptor (825 aa).

The signal sequence occupies residues 1–31; sequence MDVSLCPAKCSFWRIFLLGSVWLDYVGSVLA. 2 cysteine pairs are disulfide-bonded: Cys32–Cys38 and Cys36–Cys45. Over 32–429 the chain is Extracellular; sequence CPANCVCSKT…TVTHKPEEDT (398 aa). Residues Asn68, Asn72, and Asn79 are each glycosylated (N-linked (GlcNAc...) asparagine). 2 LRR repeats span residues 104–125 and 128–149; these read GLQK…AFAK and HLRY…LFQT. 2 N-linked (GlcNAc...) asparagine glycosylation sites follow: Asn133 and Asn163. One can recognise an LRRCT domain in the interval 160–209; the sequence is NFFNCSCDIRWMQLWQEQGEARLDSQSLYCISADGSQLPLFRMNISQCDL. 2 disulfide bridges follow: Cys164–Cys189 and Cys166–Cys207. Asn203, Asn218, Asn232, Asn259, Asn267, Asn272, and Asn294 each carry an N-linked (GlcNAc...) asparagine glycan. Ig-like C2-type domains are found at residues 210-300 and 309-382; these read PEIS…VALT and SLVE…IAKN. Cys231 and Cys284 are disulfide-bonded. An intrachain disulfide couples Cys320 to Cys362. 2 N-linked (GlcNAc...) asparagine glycosylation sites follow: Asn375 and Asn388. Residues 430–453 form a helical membrane-spanning segment; the sequence is FGVSIAVGLAAFACVLLVVLFIMI. Over 454–825 the chain is Cytoplasmic; it reads NKYGRRSKFG…ATPIYLDILG (372 aa). Phosphoserine is present on Ser493. Phosphotyrosine is present on Tyr516. Positions 538–825 constitute a Protein kinase domain; it reads IVLKRELGEG…ATPIYLDILG (288 aa). Residues 544-552 and Lys572 contribute to the ATP site; that span reads LGEGAFGKV. Asp679 acts as the Proton acceptor in catalysis. 3 positions are modified to phosphotyrosine; by autocatalysis: Tyr705, Tyr709, and Tyr710.

It belongs to the protein kinase superfamily. Tyr protein kinase family. Insulin receptor subfamily. As to quaternary structure, exists in a dynamic equilibrium between monomeric (low affinity) and dimeric (high affinity) structures. Binds SH2B2. Interacts with SQSTM1 and KIDINS220. Interacts with PTPRS. Interacts with MAPK8IP3/JIP3. Ligand-mediated auto-phosphorylation. Isoform 2 expression is restricted to specific areas in adult brain. Isoform 3 transcripts are readily detected early during embryogenesis and are expressed predominantly in adult brain and gonads.

It is found in the membrane. It catalyses the reaction L-tyrosyl-[protein] + ATP = O-phospho-L-tyrosyl-[protein] + ADP + H(+). In terms of biological role, receptor tyrosine kinase involved in nervous system and probably heart development. Upon binding of its ligand NTF3/neurotrophin-3, NTRK3 autophosphorylates and activates different signaling pathways, including the phosphatidylinositol 3-kinase/AKT and the MAPK pathways, that control cell survival and differentiation. The sequence is that of NT-3 growth factor receptor (Ntrk3) from Mus musculus (Mouse).